A 414-amino-acid chain; its full sequence is Tyrosine--tRNA ligase (414 aa).

Residue tyrosine 38 participates in L-tyrosine binding. The 'HIGH' region motif lies at 43 to 52; it reads CTARSLHIGS. L-tyrosine is bound by residues tyrosine 172 and glutamine 176. The 'KMSKS' region signature appears at 232–236; that stretch reads KMGKT. Position 235 (lysine 235) interacts with ATP. The S4 RNA-binding domain occupies 345–412; sequence ISVAKLLQLA…GKKRRIKVVV (68 aa).

It belongs to the class-I aminoacyl-tRNA synthetase family. TyrS type 1 subfamily. As to quaternary structure, homodimer.

It is found in the cytoplasm. The enzyme catalyses tRNA(Tyr) + L-tyrosine + ATP = L-tyrosyl-tRNA(Tyr) + AMP + diphosphate + H(+). In terms of biological role, catalyzes the attachment of tyrosine to tRNA(Tyr) in a two-step reaction: tyrosine is first activated by ATP to form Tyr-AMP and then transferred to the acceptor end of tRNA(Tyr). This is Tyrosine--tRNA ligase from Anaplasma marginale (strain St. Maries).